The following is a 381-amino-acid chain: MYG1 exonuclease (381 aa).

A mitochondrion-targeting transit peptide spans 1–47; that stretch reads MGRGFLRGVLTLLPLRSVLQVQHCMLVSEPDLPPKRPRNNLMAPPRI. Lysine 267 and lysine 273 each carry N6-acetyllysine.

This sequence belongs to the MYG1 family.

It is found in the nucleus. Its subcellular location is the nucleoplasm. It localises to the mitochondrion matrix. The protein localises to the nucleolus. 3'-5' RNA exonuclease which cleaves in situ on specific transcripts in both nucleus and mitochondrion. Involved in regulating spatially segregated organellar RNA processing, acts as a coordinator of nucleo-mitochondrial crosstalk. In nucleolus, processes pre-ribosomal RNA involved in ribosome assembly and alters cytoplasmic translation. In mitochondrial matrix, processes 3'-termini of the mito-ribosomal and messenger RNAs and controls translation of mitochondrial proteins. The sequence is that of MYG1 exonuclease from Rattus norvegicus (Rat).